The following is a 1037-amino-acid chain: Probable inorganic carbon transporter subunit DabA 2 (1037 aa).

Zn(2+) contacts are provided by C460, D462, H719, and C734.

This sequence belongs to the inorganic carbon transporter (TC 9.A.2) DabA family. In terms of assembly, forms a complex with DabB. It depends on Zn(2+) as a cofactor.

It is found in the cell inner membrane. In terms of biological role, part of an energy-coupled inorganic carbon pump. The sequence is that of Probable inorganic carbon transporter subunit DabA 2 from Nitrobacter winogradskyi (strain ATCC 25391 / DSM 10237 / CIP 104748 / NCIMB 11846 / Nb-255).